Reading from the N-terminus, the 312-residue chain is Coproporphyrin III ferrochelatase (312 aa).

Residues Tyr13, Arg30, 46–47 (RY), Ser54, and Tyr125 contribute to the Fe-coproporphyrin III site. Positions 182 and 263 each coordinate Fe(2+).

The protein belongs to the ferrochelatase family.

The protein localises to the cytoplasm. It catalyses the reaction Fe-coproporphyrin III + 2 H(+) = coproporphyrin III + Fe(2+). It functions in the pathway porphyrin-containing compound metabolism; protoheme biosynthesis. Functionally, involved in coproporphyrin-dependent heme b biosynthesis. Catalyzes the insertion of ferrous iron into coproporphyrin III to form Fe-coproporphyrin III. The protein is Coproporphyrin III ferrochelatase of Oceanobacillus iheyensis (strain DSM 14371 / CIP 107618 / JCM 11309 / KCTC 3954 / HTE831).